The following is a 1624-amino-acid chain: Pappalysin-1 (1624 aa).

Residues Met-1–Ala-22 form the signal peptide. A propeptide spanning residues Glu-23–Ala-81 is cleaved from the precursor. The tract at residues Val-28 to Ala-93 is disordered. Residues Ala-42–Ala-51 show a composition bias toward low complexity. 17 cysteine pairs are disulfide-bonded: Cys-141–Cys-232, Cys-324–Cys-619, Cys-329–Cys-654, Cys-411–Cys-425, Cys-421–Cys-437, Cys-454–Cys-470, Cys-471–Cys-482, Cys-580–Cys-597, Cys-584–Cys-609, Cys-707–Cys-875, Cys-710–Cys-878, Cys-750–Cys-832, Cys-772–Cys-778, Cys-944–Cys-972, Cys-957–Cys-968, Cys-980–Cys-987, and Cys-996–Cys-1008. Positions Arg-272–Pro-583 are metalloprotease. Asn-387 and Asn-398 each carry an N-linked (GlcNAc...) asparagine glycan. Residue Asn-426 is glycosylated (N-linked (GlcNAc...) asparagine). Residue Asn-516 is glycosylated (N-linked (GlcNAc...) asparagine). His-559 contacts Zn(2+). Glu-560 is a catalytic residue. Zn(2+)-binding residues include His-563 and His-569. 3 N-linked (GlcNAc...) asparagine glycosylation sites follow: Asn-598, Asn-616, and Asn-722. Asn-822 is a glycosylation site (N-linked (GlcNAc...) asparagine). Residue Asn-1023 is glycosylated (N-linked (GlcNAc...) asparagine). 19 disulfides stabilise this stretch: Cys-1033-Cys-1067, Cys-1048-Cys-1136, Cys-1189-Cys-1202, Cys-1212-Cys-1266, Cys-1224-Cys-1235, Cys-1239-Cys-1277, Cys-1282-Cys-1326, Cys-1297-Cys-1307, Cys-1311-Cys-1339, Cys-1343-Cys-1396, Cys-1359-Cys-1370, Cys-1374-Cys-1407, Cys-1412-Cys-1455, Cys-1425-Cys-1435, Cys-1439-Cys-1468, Cys-1475-Cys-1536, Cys-1489-Cys-1499, Cys-1503-Cys-1551, and Cys-1555-Cys-1573. Sushi domains follow at residues Ala-1210–Pro-1279, Val-1280–Leu-1341, Met-1342–Pro-1409, Val-1410–Glu-1470, and Gly-1473–Lys-1553. N-linked (GlcNAc...) asparagine glycosylation is found at Asn-1219 and Asn-1223. The N-linked (GlcNAc...) asparagine glycan is linked to Asn-1320. N-linked (GlcNAc...) asparagine glycosylation is present at Asn-1516.

Belongs to the peptidase M43B family. Homodimer; disulfide-linked. In pregnancy serum, predominantly found as a disulfide-linked 2:2 heterotetramer with the proform of PRG2. The cofactor is Zn(2+). As to expression, detected in kidney, spleen, brain, ovary, breast, skin, prostate, uterus, and placenta.

It is found in the secreted. It carries out the reaction Cleavage of the 135-Met-|-Lys-136 bond in insulin-like growth factor binding protein (IGFBP)-4, and the 143-Ser-|-Lys-144 bond in IGFBP-5.. Functionally, metalloproteinase which specifically cleaves IGFBP-4 and IGFBP-5, resulting in release of bound IGF. Cleavage of IGFBP-4 is dramatically enhanced by the presence of IGF, whereas cleavage of IGFBP-5 is slightly inhibited by the presence of IGF. Isoform 2 cleaves IGFBP-4 very slowly compared to PAPP-A, but its ability to cleave IGFBP-5 is unaffected. In Mus musculus (Mouse), this protein is Pappalysin-1 (Pappa).